A 268-amino-acid chain; its full sequence is Phosphatidylglycerol--prolipoprotein diacylglyceryl transferase (268 aa).

The next 7 helical transmembrane spans lie at V10–I30, L56–Y76, W92–F112, F120–I140, P174–F194, M202–V222, and W236–W256. R139 contributes to the a 1,2-diacyl-sn-glycero-3-phospho-(1'-sn-glycerol) binding site.

It belongs to the Lgt family.

Its subcellular location is the cell inner membrane. The catalysed reaction is L-cysteinyl-[prolipoprotein] + a 1,2-diacyl-sn-glycero-3-phospho-(1'-sn-glycerol) = an S-1,2-diacyl-sn-glyceryl-L-cysteinyl-[prolipoprotein] + sn-glycerol 1-phosphate + H(+). It functions in the pathway protein modification; lipoprotein biosynthesis (diacylglyceryl transfer). Catalyzes the transfer of the diacylglyceryl group from phosphatidylglycerol to the sulfhydryl group of the N-terminal cysteine of a prolipoprotein, the first step in the formation of mature lipoproteins. This is Phosphatidylglycerol--prolipoprotein diacylglyceryl transferase from Pseudomonas putida (strain ATCC 700007 / DSM 6899 / JCM 31910 / BCRC 17059 / LMG 24140 / F1).